A 53-amino-acid polypeptide reads, in one-letter code: UPF0391 membrane protein ETA_06630 (53 aa).

Transmembrane regions (helical) follow at residues 4-24 (WGII…GGLA) and 27-47 (AAWA…ISLF).

The protein belongs to the UPF0391 family.

It is found in the cell membrane. The sequence is that of UPF0391 membrane protein ETA_06630 from Erwinia tasmaniensis (strain DSM 17950 / CFBP 7177 / CIP 109463 / NCPPB 4357 / Et1/99).